The chain runs to 160 residues: E3 ubiquitin ligase complex SCF subunit sconC (160 aa).

The interaction with the F-box domain of F-box proteins stretch occupies residues 101-160 (ILAANYLDIKALLDVGCKTVANMIKGKSPEEIRKTFNIQNDFTPEEEDQIRRENEWAEDR).

It belongs to the SKP1 family. In terms of assembly, component of the SCF (SKP1-CUL1-F-box protein) E3 ubiquitin ligase complexes.

The protein operates within protein modification; protein ubiquitination. In terms of biological role, essential component of the SCF (SKP1-CUL1-F-box protein) E3 ubiquitin ligase complexes, which mediate the ubiquitination and subsequent proteasomal degradation of target proteins. Controls sulfur metabolite repression, probably by mediating the inactivation or degradation of the metR transcription factor. This is E3 ubiquitin ligase complex SCF subunit sconC (sconC) from Talaromyces stipitatus (strain ATCC 10500 / CBS 375.48 / QM 6759 / NRRL 1006) (Penicillium stipitatum).